Reading from the N-terminus, the 505-residue chain is MFGSLLLGIATLLGAIYAFLVSNFGHWRRRGVTEPRALPLFGSFPNMIWPRQHFTMDMRDIYMHYRNTHSYVGCYLLRAPKLLVLEPRLVYEIYVSAFSHFENNDASKMVDIAKDRLVALNPFVLEGEEWRHQRAVFSTLLTNGRIRTTHAIMQRVCLDLCQFIAIKSAGGKDLDCIDLGLRFTGESLFDCVLGIQARTFTDNPLPVVRQNHEMSAENRGLAIAGAVHGLFPNLPRWLRPKVFPRSHDRFYGQMISEALRLRRSKHQERNDFINHLLEMQRELDLSEEDMASHAMTFMFDGLDTTSNSIAHCLLLLGRNPDCQRRLYEELQLVNPGGYLPDLDALIDLPYLSACFNESLRIYPAGGWASKTCTKEYELRGSHHSEPLKLRPGDHVMVPIYALHNDPDLYPEPDVFRPERFLDGGLKNCKQQGIFLGFGNGPRQCVGMRLGLAMAKAALAAIVQRFEVVVSPRTLNGTELDPLIFVGVHKGGIWLQFVPRKNVTTK.

Cys-444 contributes to the heme binding site.

Belongs to the cytochrome P450 family. It depends on heme as a cofactor.

Its subcellular location is the endoplasmic reticulum membrane. It is found in the microsome membrane. Functionally, may be involved in the metabolism of insect hormones and in the breakdown of synthetic insecticides. The sequence is that of Probable cytochrome P450 28c1 (Cyp28c1) from Drosophila melanogaster (Fruit fly).